The following is a 612-amino-acid chain: UvrABC system protein C (612 aa).

In terms of domain architecture, GIY-YIG spans H21–V99. Positions Q208–T243 constitute a UVR domain.

It belongs to the UvrC family. Interacts with UvrB in an incision complex.

Its subcellular location is the cytoplasm. In terms of biological role, the UvrABC repair system catalyzes the recognition and processing of DNA lesions. UvrC both incises the 5' and 3' sides of the lesion. The N-terminal half is responsible for the 3' incision and the C-terminal half is responsible for the 5' incision. The protein is UvrABC system protein C of Idiomarina loihiensis (strain ATCC BAA-735 / DSM 15497 / L2-TR).